A 445-amino-acid polypeptide reads, in one-letter code: tRNA-2-methylthio-N(6)-dimethylallyladenosine synthase (445 aa).

In terms of domain architecture, MTTase N-terminal spans 3-124 (KKLYIKTYGC…LPELISKVVR (122 aa)). [4Fe-4S] cluster contacts are provided by Cys-12, Cys-48, Cys-87, Cys-162, Cys-166, and Cys-169. Residues 148 to 380 (YPQGTSAFIS…QQELMAQQLA (233 aa)) form the Radical SAM core domain. The TRAM domain maps to 383-445 (TSCVGSTMKV…SLNSLTGEIL (63 aa)).

This sequence belongs to the methylthiotransferase family. MiaB subfamily. Monomer. [4Fe-4S] cluster is required as a cofactor.

The protein resides in the cytoplasm. It catalyses the reaction N(6)-dimethylallyladenosine(37) in tRNA + (sulfur carrier)-SH + AH2 + 2 S-adenosyl-L-methionine = 2-methylsulfanyl-N(6)-dimethylallyladenosine(37) in tRNA + (sulfur carrier)-H + 5'-deoxyadenosine + L-methionine + A + S-adenosyl-L-homocysteine + 2 H(+). In terms of biological role, catalyzes the methylthiolation of N6-(dimethylallyl)adenosine (i(6)A), leading to the formation of 2-methylthio-N6-(dimethylallyl)adenosine (ms(2)i(6)A) at position 37 in tRNAs that read codons beginning with uridine. In Rickettsia rickettsii (strain Iowa), this protein is tRNA-2-methylthio-N(6)-dimethylallyladenosine synthase.